A 273-amino-acid chain; its full sequence is Shikimate dehydrogenase (NADP(+)) (273 aa).

Residues 14-16 (SKS) and T61 contribute to the shikimate site. K65 (proton acceptor) is an active-site residue. The shikimate site is built by N86 and D102. NADP(+)-binding positions include 126–130 (GAGGA), 150–155 (NRTVAK), and M213. Y215 is a binding site for shikimate. Residue G237 participates in NADP(+) binding.

This sequence belongs to the shikimate dehydrogenase family. As to quaternary structure, homodimer.

The catalysed reaction is shikimate + NADP(+) = 3-dehydroshikimate + NADPH + H(+). It functions in the pathway metabolic intermediate biosynthesis; chorismate biosynthesis; chorismate from D-erythrose 4-phosphate and phosphoenolpyruvate: step 4/7. Its function is as follows. Involved in the biosynthesis of the chorismate, which leads to the biosynthesis of aromatic amino acids. Catalyzes the reversible NADPH linked reduction of 3-dehydroshikimate (DHSA) to yield shikimate (SA). In Tolumonas auensis (strain DSM 9187 / NBRC 110442 / TA 4), this protein is Shikimate dehydrogenase (NADP(+)).